We begin with the raw amino-acid sequence, 323 residues long: Beta-ketoacyl-[acyl-carrier-protein] synthase III (323 aa).

Residues C113 and H250 contribute to the active site. The tract at residues 251 to 255 (QANKR) is ACP-binding. The active site involves N280.

The protein belongs to the thiolase-like superfamily. FabH family. In terms of assembly, homodimer.

It is found in the cytoplasm. It carries out the reaction malonyl-[ACP] + acetyl-CoA + H(+) = 3-oxobutanoyl-[ACP] + CO2 + CoA. The protein operates within lipid metabolism; fatty acid biosynthesis. Catalyzes the condensation reaction of fatty acid synthesis by the addition to an acyl acceptor of two carbons from malonyl-ACP. Catalyzes the first condensation reaction which initiates fatty acid synthesis and may therefore play a role in governing the total rate of fatty acid production. Possesses both acetoacetyl-ACP synthase and acetyl transacylase activities. Its substrate specificity determines the biosynthesis of branched-chain and/or straight-chain of fatty acids. The polypeptide is Beta-ketoacyl-[acyl-carrier-protein] synthase III (Mesorhizobium japonicum (strain LMG 29417 / CECT 9101 / MAFF 303099) (Mesorhizobium loti (strain MAFF 303099))).